The sequence spans 394 residues: Flavin-dependent monooxygenase, oxygenase subunit HsaA (394 aa).

FMN is bound by residues Trp-84, 118 to 120 (SSY), 141 to 143 (WSS), Arg-263, 346 to 347 (AT), and 368 to 369 (HA).

This sequence belongs to the HpaH/HsaA monooxygenase family. As to quaternary structure, homotetramer under anaerobic conditions. HsaAB monooxygenase consists of an oxygenase component HsaA and a reductase component HsaB.

It carries out the reaction 3-hydroxy-9,10-secoandrosta-1,3,5(10)-triene-9,17-dione + FMNH2 + O2 = 3,4-dihydroxy-9,10-secoandrosta-1,3,5(10)-triene-9,17-dione + FMN + H2O + H(+). It functions in the pathway lipid metabolism; steroid biosynthesis. Functionally, catalyzes the o-hydroxylation of 3-hydroxy-9,10-secoandrosta-1,3,5(10)-triene-9,17-dione (3-HSA) to 3,4-dihydroxy-9,10-secoandrosta-1,3,5(10)-triene-9,17-dione (3,4-DHSA) in the catabolism of cholesterol. The protein is Flavin-dependent monooxygenase, oxygenase subunit HsaA of Mycobacterium tuberculosis (strain CDC 1551 / Oshkosh).